The following is a 262-amino-acid chain: Hydroxyethylthiazole kinase (262 aa).

M50 contacts substrate. Residues R125 and T171 each contribute to the ATP site. G198 serves as a coordination point for substrate.

It belongs to the Thz kinase family. Mg(2+) serves as cofactor.

It carries out the reaction 5-(2-hydroxyethyl)-4-methylthiazole + ATP = 4-methyl-5-(2-phosphooxyethyl)-thiazole + ADP + H(+). It functions in the pathway cofactor biosynthesis; thiamine diphosphate biosynthesis; 4-methyl-5-(2-phosphoethyl)-thiazole from 5-(2-hydroxyethyl)-4-methylthiazole: step 1/1. Functionally, catalyzes the phosphorylation of the hydroxyl group of 4-methyl-5-beta-hydroxyethylthiazole (THZ). The polypeptide is Hydroxyethylthiazole kinase (Escherichia coli O7:K1 (strain IAI39 / ExPEC)).